Consider the following 188-residue polypeptide: ATP synthase subunit b (188 aa).

Residues 19–39 (LPAVYDIVWSAVVFVVLLVVI) traverse the membrane as a helical segment.

This sequence belongs to the ATPase B chain family. As to quaternary structure, F-type ATPases have 2 components, F(1) - the catalytic core - and F(0) - the membrane proton channel. F(1) has five subunits: alpha(3), beta(3), gamma(1), delta(1), epsilon(1). F(0) has three main subunits: a(1), b(2) and c(10-14). The alpha and beta chains form an alternating ring which encloses part of the gamma chain. F(1) is attached to F(0) by a central stalk formed by the gamma and epsilon chains, while a peripheral stalk is formed by the delta and b chains.

It localises to the cell membrane. Its function is as follows. F(1)F(0) ATP synthase produces ATP from ADP in the presence of a proton or sodium gradient. F-type ATPases consist of two structural domains, F(1) containing the extramembraneous catalytic core and F(0) containing the membrane proton channel, linked together by a central stalk and a peripheral stalk. During catalysis, ATP synthesis in the catalytic domain of F(1) is coupled via a rotary mechanism of the central stalk subunits to proton translocation. Component of the F(0) channel, it forms part of the peripheral stalk, linking F(1) to F(0). The protein is ATP synthase subunit b of Clavibacter michiganensis subsp. michiganensis (strain NCPPB 382).